Consider the following 580-residue polypeptide: MNLFTEIRTLVTAELGAMTEAGDLPAGLDLSAVAVEPPRDPAHGDMSTNAAMVLAKPSGKPPRTIAEALATRLAADPRISSAEVAGPGFLNLRLRPAVWQGMVATILQAGDTYGRSTIGAGQKVNVEFVSANPTGPMHVGHVRGAVVGDALARLLAYAGWNVTREYYINDGGAQVDVLARSAFERYREAHGLEPEIREGLYPGDYLIPVGEALKAKYGDSLLDKGEQHWLTEVREFATEMMMQMIREDLAALGVEMDVYSSEKALYGTGKIEAALDRLKEMDLIYEGVLEPPKGKTPEDWEPREQTLFRSTAHGDDVDRPVKKSDGSWTYFAPDIAYHYDKVTRGFDQLIDIFGADHGGYVKRMKAAVAALSAGRVPLDIKLIQLVKLWKNGEPFKMSKRAGTYVTLRDVVEQVGTDVTRFVMLTRKNDATLDFDFDKVLEQSKENPVFYVQYANARINSVLRKAREQGMDVSDATLATADLDRLDHPAEIALIAKLAEWPRLVEIAARTNEPHRVAFYLHELASELHGLWNRGNDEAGLRFLQDDPVVSQAKIALARAVGVVICAGLGILGVTPVEEMR.

The 'HIGH' region signature appears at A131–H141.

It belongs to the class-I aminoacyl-tRNA synthetase family. In terms of assembly, monomer.

It is found in the cytoplasm. The enzyme catalyses tRNA(Arg) + L-arginine + ATP = L-arginyl-tRNA(Arg) + AMP + diphosphate. The protein is Arginine--tRNA ligase of Cereibacter sphaeroides (strain ATCC 17023 / DSM 158 / JCM 6121 / CCUG 31486 / LMG 2827 / NBRC 12203 / NCIMB 8253 / ATH 2.4.1.) (Rhodobacter sphaeroides).